A 502-amino-acid polypeptide reads, in one-letter code: Glutamate--tRNA ligase (502 aa).

Residues 12–22 (PSPTGYLHVGG) carry the 'HIGH' region motif. A 'KMSKS' region motif is present at residues 259–263 (KLSKR). An ATP-binding site is contributed by lysine 262.

The protein belongs to the class-I aminoacyl-tRNA synthetase family. Glutamate--tRNA ligase type 1 subfamily. As to quaternary structure, monomer.

It is found in the cytoplasm. It carries out the reaction tRNA(Glu) + L-glutamate + ATP = L-glutamyl-tRNA(Glu) + AMP + diphosphate. Catalyzes the attachment of glutamate to tRNA(Glu) in a two-step reaction: glutamate is first activated by ATP to form Glu-AMP and then transferred to the acceptor end of tRNA(Glu). This is Glutamate--tRNA ligase from Pelodictyon phaeoclathratiforme (strain DSM 5477 / BU-1).